The primary structure comprises 248 residues: Ubiquinone biosynthesis O-methyltransferase (248 aa).

4 residues coordinate S-adenosyl-L-methionine: Arg-41, Gly-72, Asp-93, and Met-136.

Belongs to the methyltransferase superfamily. UbiG/COQ3 family.

It catalyses the reaction a 3-demethylubiquinol + S-adenosyl-L-methionine = a ubiquinol + S-adenosyl-L-homocysteine + H(+). The catalysed reaction is a 3-(all-trans-polyprenyl)benzene-1,2-diol + S-adenosyl-L-methionine = a 2-methoxy-6-(all-trans-polyprenyl)phenol + S-adenosyl-L-homocysteine + H(+). It functions in the pathway cofactor biosynthesis; ubiquinone biosynthesis. In terms of biological role, O-methyltransferase that catalyzes the 2 O-methylation steps in the ubiquinone biosynthetic pathway. This Rhizobium etli (strain CIAT 652) protein is Ubiquinone biosynthesis O-methyltransferase.